The chain runs to 241 residues: Octanoyltransferase (241 aa).

The 190-residue stretch at 38 to 227 (AGGPDTLLLL…AVCNALDGAL (190 aa)) folds into the BPL/LPL catalytic domain. Substrate is bound by residues 85 to 92 (RGGKITWH), 157 to 159 (AIG), and 170 to 172 (GFA). Cysteine 188 serves as the catalytic Acyl-thioester intermediate.

This sequence belongs to the LipB family.

The protein resides in the cytoplasm. The enzyme catalyses octanoyl-[ACP] + L-lysyl-[protein] = N(6)-octanoyl-L-lysyl-[protein] + holo-[ACP] + H(+). The protein operates within protein modification; protein lipoylation via endogenous pathway; protein N(6)-(lipoyl)lysine from octanoyl-[acyl-carrier-protein]: step 1/2. In terms of biological role, catalyzes the transfer of endogenously produced octanoic acid from octanoyl-acyl-carrier-protein onto the lipoyl domains of lipoate-dependent enzymes. Lipoyl-ACP can also act as a substrate although octanoyl-ACP is likely to be the physiological substrate. This is Octanoyltransferase from Mycobacterium ulcerans (strain Agy99).